Here is a 316-residue protein sequence, read N- to C-terminus: Thymidylate synthase (316 aa).

DUMP-binding positions include arginine 23 and 178-179 (RR). Catalysis depends on cysteine 198, which acts as the Nucleophile. DUMP contacts are provided by residues 218–221 (RSGD), asparagine 229, and 259–261 (HIY). Aspartate 221 lines the (6R)-5,10-methylene-5,6,7,8-tetrahydrofolate pocket. Alanine 315 contacts (6R)-5,10-methylene-5,6,7,8-tetrahydrofolate.

It belongs to the thymidylate synthase family. Bacterial-type ThyA subfamily. Homodimer.

Its subcellular location is the cytoplasm. The catalysed reaction is dUMP + (6R)-5,10-methylene-5,6,7,8-tetrahydrofolate = 7,8-dihydrofolate + dTMP. The protein operates within pyrimidine metabolism; dTTP biosynthesis. Functionally, catalyzes the reductive methylation of 2'-deoxyuridine-5'-monophosphate (dUMP) to 2'-deoxythymidine-5'-monophosphate (dTMP) while utilizing 5,10-methylenetetrahydrofolate (mTHF) as the methyl donor and reductant in the reaction, yielding dihydrofolate (DHF) as a by-product. This enzymatic reaction provides an intracellular de novo source of dTMP, an essential precursor for DNA biosynthesis. The protein is Thymidylate synthase of Lactiplantibacillus plantarum (strain ATCC BAA-793 / NCIMB 8826 / WCFS1) (Lactobacillus plantarum).